A 167-amino-acid polypeptide reads, in one-letter code: NADH-ubiquinone oxidoreductase chain 4 (167 aa).

3 helical membrane-spanning segments follow: residues 2–22, 44–64, and 86–106; these read FIGATTLMIAHGLTSSLLFCL, LLPLAATWWLLASLTNLALPP, and IILVGLNTLITALYSLYMLIM.

It belongs to the complex I subunit 4 family.

The protein resides in the mitochondrion membrane. The catalysed reaction is a ubiquinone + NADH + 5 H(+)(in) = a ubiquinol + NAD(+) + 4 H(+)(out). Its function is as follows. Core subunit of the mitochondrial membrane respiratory chain NADH dehydrogenase (Complex I) that is believed to belong to the minimal assembly required for catalysis. Complex I functions in the transfer of electrons from NADH to the respiratory chain. The immediate electron acceptor for the enzyme is believed to be ubiquinone. The chain is NADH-ubiquinone oxidoreductase chain 4 (MT-ND4) from Carlito syrichta (Philippine tarsier).